The sequence spans 369 residues: Serine/threonine-protein phosphatase PP2A-1 catalytic subunit (369 aa).

The disordered stretch occupies residues 1-57; it reads MDTDLDVPMQDAVTEQLTPTVSEDMDLNNNSSDNNAEEFSVDDLKPGSSGIADHKSS. Asp-117, His-119, Asp-145, and Asn-177 together coordinate Mn(2+). His-178 serves as the catalytic Proton donor. 2 residues coordinate Mn(2+): His-227 and His-301. The segment at 348–369 is disordered; it reads QYDPSVRPGEPSVSRKTPDYFL. Leu-369 is modified (leucine methyl ester).

It belongs to the PPP phosphatase family. PP-2A subfamily. Inactivated in a complex with phosphatase methylesterase PPE1 (PP2Ai). Interacts with phosphatase 2A activator RRD2, which can reactivate PP2Ai by dissociating the catalytic subunit from the complex. Forms a ternary complex with RRD2-TAP42. Mn(2+) serves as cofactor. Reversibly methyl esterified on Leu-369 by leucine carboxyl methyltransferase 1 (PPM1) and protein phosphatase methylesterase 1 (PPE1). Carboxyl methylation influences the affinity of the catalytic subunit for the different regulatory subunits, thereby modulating the PP2A holoenzyme's substrate specificity, enzyme activity and cellular localization.

The enzyme catalyses O-phospho-L-seryl-[protein] + H2O = L-seryl-[protein] + phosphate. It catalyses the reaction O-phospho-L-threonyl-[protein] + H2O = L-threonyl-[protein] + phosphate. Functionally, exact function not known, phosphatase 2A performs an essential cellular function. This chain is Serine/threonine-protein phosphatase PP2A-1 catalytic subunit (PPH21), found in Saccharomyces cerevisiae (strain ATCC 204508 / S288c) (Baker's yeast).